A 380-amino-acid polypeptide reads, in one-letter code: tRNA-specific 2-thiouridylase MnmA (380 aa).

ATP is bound by residues 10–17 and Leu-36; that span reads AMSGGVDS. The active-site Nucleophile is Cys-106. An intrachain disulfide couples Cys-106 to Cys-202. ATP is bound at residue Gly-130. Positions 152-154 are interaction with tRNA; that stretch reads KNQ. The active-site Cysteine persulfide intermediate is Cys-202. Positions 308 to 309 are interaction with tRNA; that stretch reads RY.

The protein belongs to the MnmA/TRMU family.

Its subcellular location is the cytoplasm. It carries out the reaction S-sulfanyl-L-cysteinyl-[protein] + uridine(34) in tRNA + AH2 + ATP = 2-thiouridine(34) in tRNA + L-cysteinyl-[protein] + A + AMP + diphosphate + H(+). Its function is as follows. Catalyzes the 2-thiolation of uridine at the wobble position (U34) of tRNA, leading to the formation of s(2)U34. The protein is tRNA-specific 2-thiouridylase MnmA of Leptospira biflexa serovar Patoc (strain Patoc 1 / Ames).